The sequence spans 342 residues: Succinylglutamate desuccinylase (342 aa).

Residues H63, E66, and H155 each contribute to the Zn(2+) site. E219 is a catalytic residue.

This sequence belongs to the AspA/AstE family. Succinylglutamate desuccinylase subfamily. The cofactor is Zn(2+).

It catalyses the reaction N-succinyl-L-glutamate + H2O = L-glutamate + succinate. It functions in the pathway amino-acid degradation; L-arginine degradation via AST pathway; L-glutamate and succinate from L-arginine: step 5/5. Functionally, transforms N(2)-succinylglutamate into succinate and glutamate. In Vibrio parahaemolyticus serotype O3:K6 (strain RIMD 2210633), this protein is Succinylglutamate desuccinylase.